A 396-amino-acid chain; its full sequence is S-arrestin (396 aa).

Belongs to the arrestin family.

In terms of biological role, arrestin is one of the major proteins of the ros (retinal rod outer segments); it binds to photoactivated-phosphorylated rhodopsin, thereby apparently preventing the transducin-mediated activation of phosphodiesterase. This chain is S-arrestin, found in Aquarana catesbeiana (American bullfrog).